The primary structure comprises 334 residues: ELMO domain-containing protein 1 (334 aa).

The region spanning 133–314 (QHEEMLLKLW…KFRKRIIKQL (182 aa)) is the ELMO domain.

Functionally, acts as a GTPase-activating protein (GAP) toward guanine nucleotide exchange factors like ARL2, ARL3, ARF1 and ARF6, but not for GTPases outside the Arf family. The chain is ELMO domain-containing protein 1 (ELMOD1) from Homo sapiens (Human).